The sequence spans 155 residues: MSTEKINLDIHKILTLLPHRYPILLVDRVLELEPHKGIKALKNVSINEPFFQGHFPKRPVMPGVLILEALAQAAALLTFAEEQPKDPENTLYYFVGIDGARFKRVVEPGDQLILNVTFERYIRGIWKFKAVAEVDGKVAAEAELMCTVKTADAAP.

His-54 is a catalytic residue.

This sequence belongs to the thioester dehydratase family. FabZ subfamily.

The protein resides in the cytoplasm. It catalyses the reaction a (3R)-hydroxyacyl-[ACP] = a (2E)-enoyl-[ACP] + H2O. Involved in unsaturated fatty acids biosynthesis. Catalyzes the dehydration of short chain beta-hydroxyacyl-ACPs and long chain saturated and unsaturated beta-hydroxyacyl-ACPs. The chain is 3-hydroxyacyl-[acyl-carrier-protein] dehydratase FabZ from Burkholderia ambifaria (strain MC40-6).